Consider the following 483-residue polypeptide: UDP-glucosyl transferase 73B2 (483 aa).

H22 (proton acceptor) is an active-site residue. H22 contacts an anthocyanidin. Catalysis depends on D133, which acts as the Charge relay. 7 residues coordinate UDP-alpha-D-glucose: A355, Q357, H372, W375, N376, S377, and E380. Residue A395 participates in an anthocyanidin binding. UDP-alpha-D-glucose contacts are provided by E396 and Q397.

It belongs to the UDP-glycosyltransferase family. As to expression, expressed in roots and flowers.

The enzyme catalyses a 7-O-hydroxy-flavonol + UDP-alpha-D-glucose = a flavonol 7-O-beta-D-glucoside + UDP + H(+). It participates in secondary metabolite biosynthesis; flavonoid biosynthesis. In terms of biological role, catalyzes the glycosylation of flavonoids from UDP-glucose. Uses a wide range of flavonoid substrates including flavonols (quercetin, kaempferol, isorhamnetin, 3-OH 7,2',4'-MeO-flavone), flavones (luteolin, apigenin), flavanones (naringenin, hesperetin), flavanonols (taxifolin), isoflavones (genistein, daidzein), flavonol glycosides (quercitrin, isoquercitrin, rutin), and chalcones (isoliquiritigenin). Specific for the C-7 position, with a 20-fold lower activity for the C-3 position. The chain is UDP-glucosyl transferase 73B2 (UGT73B2) from Arabidopsis thaliana (Mouse-ear cress).